A 776-amino-acid polypeptide reads, in one-letter code: Probable exo-1,4-beta-xylosidase bxlB (776 aa).

Positions 1-23 (MVHLSPLLRPLAAFSFFTSLAST) are cleaved as a signal peptide. 2 N-linked (GlcNAc...) asparagine glycosylation sites follow: N65 and N105. D291 is a catalytic residue. N-linked (GlcNAc...) asparagine glycosylation is found at N343, N410, N421, N462, N623, and N766.

The protein belongs to the glycosyl hydrolase 3 family.

Its subcellular location is the secreted. The enzyme catalyses Hydrolysis of (1-&gt;4)-beta-D-xylans, to remove successive D-xylose residues from the non-reducing termini.. It participates in glycan degradation; xylan degradation. In terms of biological role, xylan 1,4-beta-xylosidase involved in the hydrolysis of xylan, a major structural heterogeneous polysaccharide found in plant biomass representing the second most abundant polysaccharide in the biosphere, after cellulose. The polypeptide is Probable exo-1,4-beta-xylosidase bxlB (bxlB) (Aspergillus flavus (strain ATCC 200026 / FGSC A1120 / IAM 13836 / NRRL 3357 / JCM 12722 / SRRC 167)).